The chain runs to 243 residues: Methylthioribulose-1-phosphate dehydratase (243 aa).

The segment at 1–22 (MCPADQTVATNNNDHLVQSEDP) is disordered. The span at 7–16 (TVATNNNDHL) shows a compositional bias: polar residues. Residue Cys-103 coordinates substrate. Zn(2+) contacts are provided by His-120 and His-122. The active-site Proton donor/acceptor is Glu-149. His-205 is a Zn(2+) binding site.

Belongs to the aldolase class II family. MtnB subfamily. Zn(2+) is required as a cofactor.

Its subcellular location is the cytoplasm. The catalysed reaction is 5-(methylsulfanyl)-D-ribulose 1-phosphate = 5-methylsulfanyl-2,3-dioxopentyl phosphate + H2O. The protein operates within amino-acid biosynthesis; L-methionine biosynthesis via salvage pathway; L-methionine from S-methyl-5-thio-alpha-D-ribose 1-phosphate: step 2/6. In terms of biological role, catalyzes the dehydration of methylthioribulose-1-phosphate (MTRu-1-P) into 2,3-diketo-5-methylthiopentyl-1-phosphate (DK-MTP-1-P). This chain is Methylthioribulose-1-phosphate dehydratase, found in Penicillium rubens (strain ATCC 28089 / DSM 1075 / NRRL 1951 / Wisconsin 54-1255) (Penicillium chrysogenum).